Reading from the N-terminus, the 349-residue chain is Outer membrane protein assembly factor BamC (349 aa).

Residues 1–24 (MAILLQKSKVMKIAGMSLAMLLAA) form the signal peptide. The N-palmitoyl cysteine moiety is linked to residue Cys-25. Cys-25 is lipidated: S-diacylglycerol cysteine.

It belongs to the BamC family. In terms of assembly, part of the Bam complex, which is composed of the outer membrane protein BamA, and four lipoproteins BamB, BamC, BamD and BamE.

The protein resides in the cell outer membrane. In terms of biological role, part of the outer membrane protein assembly complex, which is involved in assembly and insertion of beta-barrel proteins into the outer membrane. The chain is Outer membrane protein assembly factor BamC from Photorhabdus asymbiotica subsp. asymbiotica (strain ATCC 43949 / 3105-77) (Xenorhabdus luminescens (strain 2)).